A 518-amino-acid polypeptide reads, in one-letter code: Beta-TrCP (518 aa).

Residues 1–12 show a composition bias toward polar residues; sequence MEGFSCSLQPPT. The tract at residues 1-24 is disordered; the sequence is MEGFSCSLQPPTASEREDCNRDEP. A compositionally biased stretch (basic and acidic residues) spans 14–24; sequence SEREDCNRDEP. The region spanning 119–157 is the F-box domain; it reads DHIAENILSYLDAKSLCSAELVCKEWYRVTSDGMLWKKL. WD repeat units lie at residues 230–258, 270–298, 310–338, 353–381, 393–421, 433–461, and 482–510; these read ETSK…KIWD, GHTG…RVWD, HHCE…AVWD, GHRA…KVWN, GHKR…RLWD, GHEE…KVWD, and EHSG…LIWD.

Part of a SCF (SKP1-cullin-F-box) ubiquitin-protein ligase complex. Interacts with fbxo5.

Functionally, substrate recognition component of a SCF (SKP1-CUL1-F-box protein) E3 ubiquitin-protein ligase complex which mediates the ubiquitination and subsequent proteasomal degradation of target proteins. Probably recognizes and binds to phosphorylated target proteins. May participate in Wnt signaling. In Xenopus laevis (African clawed frog), this protein is Beta-TrCP (fbxw1).